A 347-amino-acid polypeptide reads, in one-letter code: MWSYVWLPLVALSLFKDSIIMAKAATILLPSQTGFDISRSPVCSAPDPNLNYRPVIGILSHPGDGASGRLSNATDASSIAASYVKLAESGGARVIPLIFNEPEEILFQKLELVNGVILTGGWAKEGLYFEIVKKIFNKVLERNDAGEHFPIYAICLGFELLTMIISQNRDIFEKMDARNSASSLQFVENVNIQGTIFQRFPPELLKKLGTDCLVMQNHRFGISPQSFEGNIALSNFFKIVTTCVDDNGKVYVSTVQSTKYPVTGFQWHPEKNAFEWGSSKIPHSEDAIQVTQHAANHLVSEARKSLNRPESKKVLSNLIYNYKPTYCGYAGIGYDEVYIFTQQRSLL.

A signal peptide spans 1–22 (MWSYVWLPLVALSLFKDSIIMA). Residues 45–341 (APDPNLNYRP…IGYDEVYIFT (297 aa)) form the Gamma-glutamyl hydrolase domain. Catalysis depends on C155, which acts as the Nucleophile. H268 (proton donor) is an active-site residue.

This sequence belongs to the peptidase C26 family. In terms of tissue distribution, expressed in roots, in leaves, stems and siliques.

The protein localises to the vacuole. The protein resides in the secreted. It is found in the extracellular space. Its subcellular location is the cell wall. The catalysed reaction is (6S)-5,6,7,8-tetrahydrofolyl-(gamma-L-Glu)(n) + (n-1) H2O = (6S)-5,6,7,8-tetrahydrofolate + (n-1) L-glutamate. In terms of biological role, cleaves the polyglutamate sidechains of folate polyglutamates in the vacuole. Is important for polyglutamyl tail length determination before vacuolar exit. Plays a role on folate stability and intracellular folate content. Has endopeptidase activity against 4-amino-10-methylpteroyl penta-, tetra-, tri- and di-gamma-L-glutamate substrates and is responsible for the production of folic acid, also called pteroylglutamic acid (PteGlu) from teroylpolyglutamates. The chain is Gamma-glutamyl hydrolase 2 (GGH2) from Arabidopsis thaliana (Mouse-ear cress).